Reading from the N-terminus, the 461-residue chain is Chromosomal replication initiator protein DnaA (461 aa).

The segment at 1 to 68 (MINAWAQIEH…EKAAASVLGS (68 aa)) is domain I, interacts with DnaA modulators. The tract at residues 68–118 (SVPTITVVSGEEPAAAPRPVQVPAQKRPAAARTSGAEQMGLPLHYASRSAD) is domain II. Residues 119–336 (SIKWMHSFDE…SCLRNLLLKA (218 aa)) form a domain III, AAA+ region region. ATP-binding residues include Gly-162, Gly-164, Lys-165, and Thr-166. Residues 337-461 (RLLNQQITMD…VERNGRIIHP (125 aa)) are domain IV, binds dsDNA.

It belongs to the DnaA family. Oligomerizes as a right-handed, spiral filament on DNA at oriC.

The protein resides in the cytoplasm. Functionally, plays an essential role in the initiation and regulation of chromosomal replication. ATP-DnaA binds to the origin of replication (oriC) to initiate formation of the DNA replication initiation complex once per cell cycle. Binds the DnaA box (a 9 base pair repeat at the origin) and separates the double-stranded (ds)DNA. Forms a right-handed helical filament on oriC DNA; dsDNA binds to the exterior of the filament while single-stranded (ss)DNA is stabiized in the filament's interior. The ATP-DnaA-oriC complex binds and stabilizes one strand of the AT-rich DNA unwinding element (DUE), permitting loading of DNA polymerase. After initiation quickly degrades to an ADP-DnaA complex that is not apt for DNA replication. Binds acidic phospholipids. This Oleidesulfovibrio alaskensis (strain ATCC BAA-1058 / DSM 17464 / G20) (Desulfovibrio alaskensis) protein is Chromosomal replication initiator protein DnaA.